Reading from the N-terminus, the 558-residue chain is Glutamine-dependent NAD(+) synthetase (558 aa).

The CN hydrolase domain occupies 2–262 (FTIALAQLNP…LALLSYDLSS (261 aa)). The Proton acceptor; for glutaminase activity role is filled by glutamate 42. Lysine 117 acts as the For glutaminase activity in catalysis. Residue tyrosine 123 coordinates L-glutamine. Residue cysteine 153 is the Nucleophile; for glutaminase activity of the active site. L-glutamine contacts are provided by serine 190 and lysine 196. The tract at residues 284–558 (ALVLGVGDYL…IAQAFHPQGS (275 aa)) is ligase. 304 to 311 (GLSGGIDS) lines the ATP pocket. Asparagine 387 is a binding site for deamido-NAD(+). An ATP-binding site is contributed by threonine 411. Deamido-NAD(+) is bound by residues glutamate 416 and lysine 526.

In the C-terminal section; belongs to the NAD synthetase family.

It catalyses the reaction deamido-NAD(+) + L-glutamine + ATP + H2O = L-glutamate + AMP + diphosphate + NAD(+) + H(+). Its pathway is cofactor biosynthesis; NAD(+) biosynthesis; NAD(+) from deamido-NAD(+) (L-Gln route): step 1/1. Its function is as follows. Catalyzes the ATP-dependent amidation of deamido-NAD to form NAD. Uses L-glutamine as a nitrogen source. This is Glutamine-dependent NAD(+) synthetase from Synechocystis sp. (strain ATCC 27184 / PCC 6803 / Kazusa).